Reading from the N-terminus, the 418-residue chain is cAMP-dependent protein kinase type II-beta regulatory subunit (418 aa).

The tract at residues 2–153 (SIEIPAGLTE…RLQEACKDIL (152 aa)) is dimerization and phosphorylation. Basic and acidic residues predominate over residues 45 to 57 (RKGTARFGHEGRT). A disordered region spans residues 45–98 (RKGTARFGHEGRTWGDAGAAGGGGTPSKGVNFAEEPRHSDSENGEEEEEEAADA). At Thr-69 the chain carries Phosphothreonine. Ser-83 and Ser-85 each carry phosphoserine. The segment covering 86–96 (ENGEEEEEEAA) has biased composition (acidic residues). Residue Ser-114 is modified to Phosphoserine. 3',5'-cyclic AMP-binding positions include 154-275 (LFKN…ESLP), Glu-223, Arg-232, 276-418 (FLKS…EPTA), Glu-352, and Arg-361.

It belongs to the cAMP-dependent kinase regulatory chain family. As to quaternary structure, the inactive form of the enzyme is composed of two regulatory chains and two catalytic chains. Activation by cAMP produces two active catalytic monomers and a regulatory dimer that binds four cAMP molecules. Interacts with PRKACA and PRKACB. Interacts with the phosphorylated form of PJA2. Forms a complex composed of PRKAR2B, GSK3B and GSKIP through GSKIP interaction; facilitates PKA-induced phosphorylation and regulates GSK3B activity. Phosphorylated by the activated catalytic chain. In terms of tissue distribution, four types of regulatory chains are found: I-alpha, I-beta, II-alpha, and II-beta. Their expression varies among tissues and is in some cases constitutive and in others inducible.

It is found in the cytoplasm. The protein localises to the cell membrane. Regulatory subunit of the cAMP-dependent protein kinases involved in cAMP signaling in cells. Type II regulatory chains mediate membrane association by binding to anchoring proteins, including the MAP2 kinase. The chain is cAMP-dependent protein kinase type II-beta regulatory subunit (PRKAR2B) from Bos taurus (Bovine).